The primary structure comprises 365 residues: Alanine racemase (365 aa).

Catalysis depends on K32, which acts as the Proton acceptor; specific for D-alanine. K32 is subject to N6-(pyridoxal phosphate)lysine. R128 is a substrate binding site. The Proton acceptor; specific for L-alanine role is filled by Y257. M305 contacts substrate.

The protein belongs to the alanine racemase family. Requires pyridoxal 5'-phosphate as cofactor.

It carries out the reaction L-alanine = D-alanine. It functions in the pathway amino-acid biosynthesis; D-alanine biosynthesis; D-alanine from L-alanine: step 1/1. Functionally, catalyzes the interconversion of L-alanine and D-alanine. May also act on other amino acids. This chain is Alanine racemase (alr), found in Francisella tularensis subsp. tularensis (strain WY96-3418).